Consider the following 259-residue polypeptide: Nodulation protein J (259 aa).

Residues 30-256 (ASILGNLADP…LVSTALLRRR (227 aa)) enclose the ABC transmembrane type-2 domain. 6 helical membrane-spanning segments follow: residues 32 to 52 (ILGN…GLGV), 64 to 84 (AFLA…FETI), 116 to 136 (AWAA…AAML), 141 to 161 (WLAL…FASL), 174 to 194 (YFIF…GAVF), and 228 to 248 (IANV…PFLV).

It belongs to the ABC-2 integral membrane protein family. Lipooligosaccharide exporter (TC 3.A.1.102) subfamily. The complex is composed of two ATP-binding proteins (NodI) and two transmembrane proteins (NodJ).

The protein localises to the cell inner membrane. In terms of biological role, part of the ABC transporter complex NodIJ involved in the export of the nodulation factors (Nod factors), the bacterial signal molecules that induce symbiosis and subsequent nodulation induction. Nod factors are LCO (lipo-chitin oligosaccharide), a modified beta-1,4-linked N-acetylglucosamine oligosaccharide. This subunit encodes the transporter. The sequence is that of Nodulation protein J (nodJ) from Rhizobium leguminosarum bv. viciae.